Here is a 346-residue protein sequence, read N- to C-terminus: Very-long-chain 3-oxoacyl-CoA reductase (346 aa).

Residues 26 to 46 (GASALLAAGSLFVVSRALVFV) traverse the membrane as a helical segment. 8 residues coordinate NADP(+): V71, D126, D134, N153, Y220, K224, I253, and S255. The active-site Proton donor is Y220. K224 serves as the catalytic Lowers pKa of active site Tyr.

It belongs to the short-chain dehydrogenases/reductases (SDR) family.

It is found in the endoplasmic reticulum membrane. It carries out the reaction a very-long-chain (3R)-3-hydroxyacyl-CoA + NADP(+) = a very-long-chain 3-oxoacyl-CoA + NADPH + H(+). It participates in lipid metabolism; fatty acid biosynthesis. Component of the microsomal membrane bound fatty acid elongation system, which produces the 26-carbon very long-chain fatty acids (VLCFA) from palmitate. Catalyzes the reduction of the 3-ketoacyl-CoA intermediate that is formed in each cycle of fatty acid elongation. VLCFAs serve as precursors for ceramide and sphingolipids. The chain is Very-long-chain 3-oxoacyl-CoA reductase from Aspergillus niger (strain ATCC MYA-4892 / CBS 513.88 / FGSC A1513).